Here is an 89-residue protein sequence, read N- to C-terminus: ATP synthase subunit c (89 aa).

Helical transmembrane passes span 3–23 and 53–73; these read IILG…AIGA and FILA…ALMF.

This sequence belongs to the ATPase C chain family. As to quaternary structure, F-type ATPases have 2 components, F(1) - the catalytic core - and F(0) - the membrane proton channel. F(1) has five subunits: alpha(3), beta(3), gamma(1), delta(1), epsilon(1). F(0) has three main subunits: a(1), b(2) and c(10-14). The alpha and beta chains form an alternating ring which encloses part of the gamma chain. F(1) is attached to F(0) by a central stalk formed by the gamma and epsilon chains, while a peripheral stalk is formed by the delta and b chains.

It is found in the cell inner membrane. Its function is as follows. F(1)F(0) ATP synthase produces ATP from ADP in the presence of a proton or sodium gradient. F-type ATPases consist of two structural domains, F(1) containing the extramembraneous catalytic core and F(0) containing the membrane proton channel, linked together by a central stalk and a peripheral stalk. During catalysis, ATP synthesis in the catalytic domain of F(1) is coupled via a rotary mechanism of the central stalk subunits to proton translocation. Key component of the F(0) channel; it plays a direct role in translocation across the membrane. A homomeric c-ring of between 10-14 subunits forms the central stalk rotor element with the F(1) delta and epsilon subunits. The protein is ATP synthase subunit c of Verminephrobacter eiseniae (strain EF01-2).